Reading from the N-terminus, the 530-residue chain is MSSLRPEEARKLATAASVSPLSNCQFCGVVISSIADEQKLEFTNKYKGSCTLLCSYDSQGVVLRVVSDDDRSHVLKEYMIAADTDAAQMGRRSYAVSLDADNLVLRFASEQDQQLFRKVVENVKHLRPKSVFSQRTEESSASQYFQFYGYLSQQQNMMQDYVRTSTYQRAILGNAVDFQDKIVLDVGAGSGILSFFAVQAGAAKVYAIEASNMAQYAQQLVESNNVQHKISVIPGKIEEIELPEKVDVIISEPMGYMLYNERMLETYLHARKWLKPQGKMYPTHGDLHIAPFSDESLYSEQYNKANFWYQSAFHGVDLTTLHKEGMKEYFRQPIVDTFDIRICMAKSVRHVCDFLNDKEDDLHLISIPLEFHILQTGICHGLAFWFDVEFSGSSQNVWLSTSPTAPLTHWYQVRCLLPMPIFIKQGQTLTGRVLLEANRRQSYDVTIDLHIEGTLISSSNTLDLKNPYFRYTGAPVQAPPGTSTQSPSEQYWTQVDTQGSRNSSSMLNGGISVNGIGEGMDITHGLMHPH.

The SAM-dependent MTase PRMT-type domain occupies 141–450 (ASQYFQFYGY…QSYDVTIDLH (310 aa)). The S-adenosyl-L-methionine site is built by Q154, R163, G187, E209, E238, and T266. R501 carries the post-translational modification Asymmetric dimethylarginine; by autocatalysis.

It belongs to the class I-like SAM-binding methyltransferase superfamily. Protein arginine N-methyltransferase family. As to quaternary structure, homodimer. Interacts with EcR. The dimethylated protein is the major form. In terms of tissue distribution, present ubiquitously (at protein level). Expressed in the imaginal disks and in larval brains, and to a much lesser degree in the polytene larval tissue such as salivary glands.

The protein resides in the cytoplasm. Its subcellular location is the nucleus. The enzyme catalyses L-arginyl-[protein] + 2 S-adenosyl-L-methionine = N(omega),N(omega)-dimethyl-L-arginyl-[protein] + 2 S-adenosyl-L-homocysteine + 2 H(+). In terms of biological role, methylates (mono- and asymmetric dimethylation) the guanidino nitrogens of arginyl residues in proteins. May methylate histone H3 at 'Arg-17' and activate transcription via chromatin remodeling. Coordinates ecdysone-mediated expression of cell death genes. The protein is Probable histone-arginine methyltransferase CARMER (Art4) of Drosophila melanogaster (Fruit fly).